A 652-amino-acid polypeptide reads, in one-letter code: Nucleolar GTP-binding protein 1 (652 aa).

One can recognise an OBG-type G domain in the interval 169 to 341 (RTIIICGFPN…VKTEACERLL (173 aa)). GTP is bound by residues 175-182 (GFPNVGKS), 221-225 (DTPGI), and 289-292 (NKID). Residues 501–521 (RLSSRKNKPVIPRNKQPKVRD) form a disordered region.

It belongs to the TRAFAC class OBG-HflX-like GTPase superfamily. OBG GTPase family. NOG subfamily.

The protein localises to the nucleus. Its subcellular location is the nucleolus. In terms of biological role, involved in the biogenesis of the 60S ribosomal subunit. Required for normal assembly of the mitotic spindle. May be involved in both centrosome-dependent and centrosome-independent spindle assembly programs. Acts as a TP53 repressor, preventing TP53 stabilization and cell cycle arrest. This is Nucleolar GTP-binding protein 1 from Drosophila melanogaster (Fruit fly).